The sequence spans 1360 residues: DNA-directed RNA polymerase subunit beta (1360 aa).

Belongs to the RNA polymerase beta chain family. As to quaternary structure, the RNAP catalytic core consists of 2 alpha, 1 beta, 1 beta' and 1 omega subunit. When a sigma factor is associated with the core the holoenzyme is formed, which can initiate transcription.

It carries out the reaction RNA(n) + a ribonucleoside 5'-triphosphate = RNA(n+1) + diphosphate. In terms of biological role, DNA-dependent RNA polymerase catalyzes the transcription of DNA into RNA using the four ribonucleoside triphosphates as substrates. The sequence is that of DNA-directed RNA polymerase subunit beta from Teredinibacter turnerae (strain ATCC 39867 / T7901).